The chain runs to 200 residues: Large ribosomal subunit protein uL4 (200 aa).

Positions 43 to 71 (RAQKTRAEVSGSGKKPWRQKGTGRARSGD) are disordered.

Belongs to the universal ribosomal protein uL4 family. In terms of assembly, part of the 50S ribosomal subunit.

In terms of biological role, one of the primary rRNA binding proteins, this protein initially binds near the 5'-end of the 23S rRNA. It is important during the early stages of 50S assembly. It makes multiple contacts with different domains of the 23S rRNA in the assembled 50S subunit and ribosome. Functionally, forms part of the polypeptide exit tunnel. This is Large ribosomal subunit protein uL4 from Histophilus somni (strain 129Pt) (Haemophilus somnus).